An 80-amino-acid polypeptide reads, in one-letter code: uncharacterized protein (80 aa).

This is an uncharacterized protein from Vaccinia virus (strain Western Reserve) (VACV).